Here is a 91-residue protein sequence, read N- to C-terminus: Small ribosomal subunit protein uS19 (91 aa).

It belongs to the universal ribosomal protein uS19 family.

Its function is as follows. Protein S19 forms a complex with S13 that binds strongly to the 16S ribosomal RNA. The protein is Small ribosomal subunit protein uS19 of Shouchella clausii (strain KSM-K16) (Alkalihalobacillus clausii).